We begin with the raw amino-acid sequence, 185 residues long: Elongation factor P (185 aa).

Belongs to the elongation factor P family.

It is found in the cytoplasm. The protein operates within protein biosynthesis; polypeptide chain elongation. Its function is as follows. Involved in peptide bond synthesis. Stimulates efficient translation and peptide-bond synthesis on native or reconstituted 70S ribosomes in vitro. Probably functions indirectly by altering the affinity of the ribosome for aminoacyl-tRNA, thus increasing their reactivity as acceptors for peptidyl transferase. In Synechococcus sp. (strain JA-3-3Ab) (Cyanobacteria bacterium Yellowstone A-Prime), this protein is Elongation factor P.